The following is a 502-amino-acid chain: Cytochrome P450 71B19 (502 aa).

The chain crosses the membrane as a helical span at residues Met-1–Lys-21. Cys-444 is a heme binding site.

The protein belongs to the cytochrome P450 family. It depends on heme as a cofactor.

Its subcellular location is the membrane. This Arabidopsis thaliana (Mouse-ear cress) protein is Cytochrome P450 71B19 (CYP71B19).